Reading from the N-terminus, the 534-residue chain is ATP synthase subunit alpha 2 (534 aa).

175 to 182 (GDRQTGKT) serves as a coordination point for ATP. The interval 506–534 (FQPAPEPETAPKTKTDIKPKPKAAGGESS) is disordered. The span at 514 to 524 (TAPKTKTDIKP) shows a compositional bias: basic and acidic residues.

This sequence belongs to the ATPase alpha/beta chains family. As to quaternary structure, F-type ATPases have 2 components, CF(1) - the catalytic core - and CF(0) - the membrane proton channel. CF(1) has five subunits: alpha(3), beta(3), gamma(1), delta(1), epsilon(1). CF(0) has three main subunits: a(1), b(2) and c(9-12). The alpha and beta chains form an alternating ring which encloses part of the gamma chain. CF(1) is attached to CF(0) by a central stalk formed by the gamma and epsilon chains, while a peripheral stalk is formed by the delta and b chains.

The protein resides in the cell inner membrane. It catalyses the reaction ATP + H2O + 4 H(+)(in) = ADP + phosphate + 5 H(+)(out). Its function is as follows. Produces ATP from ADP in the presence of a proton gradient across the membrane. The alpha chain is a regulatory subunit. This Albidiferax ferrireducens (strain ATCC BAA-621 / DSM 15236 / T118) (Rhodoferax ferrireducens) protein is ATP synthase subunit alpha 2.